The following is a 107-amino-acid chain: uncharacterized protein (107 aa).

Residues 86-107 (QVSNHEEDADVLETQDDNAEQV) are disordered. The span at 92 to 107 (EDADVLETQDDNAEQV) shows a compositional bias: acidic residues.

This is an uncharacterized protein from Rickettsia prowazekii (strain Madrid E).